A 186-amino-acid polypeptide reads, in one-letter code: MKINGNEIRPGNVIEHEGGLWVAVKTNAVKPGKGGAYNQVELKNLINGTKLNERFRAAETVERVRLEQKDFSFLYEQGEALIFMDTETYEQLELQKDFVGDRAAFLQDGMMVTVELYEEKPIGIRLPDQVTLAITEADPVVKGQTAASSYKPAVLENGIRILVPPFIASGERVIVDTNELTYISRA.

The protein belongs to the elongation factor P family.

Its subcellular location is the cytoplasm. Its pathway is protein biosynthesis; polypeptide chain elongation. In terms of biological role, involved in peptide bond synthesis. Stimulates efficient translation and peptide-bond synthesis on native or reconstituted 70S ribosomes in vitro. Probably functions indirectly by altering the affinity of the ribosome for aminoacyl-tRNA, thus increasing their reactivity as acceptors for peptidyl transferase. In Brucella canis (strain ATCC 23365 / NCTC 10854 / RM-666), this protein is Elongation factor P.